The following is a 404-amino-acid chain: Glycerol-1-phosphate dehydrogenase [NAD(P)+] (404 aa).

NAD(+) contacts are provided by residues aspartate 55, 117-121 (GTVHD), and 139-142 (TAPS). Aspartate 144 serves as a coordination point for substrate. An NAD(+)-binding site is contributed by serine 148. Aspartate 191 provides a ligand contact to substrate. Positions 191 and 271 each coordinate Ni(2+). Position 275 (histidine 275) interacts with substrate. Histidine 291 is a binding site for Ni(2+).

The protein belongs to the glycerol-1-phosphate dehydrogenase family. In terms of assembly, homodimer. Ni(2+) is required as a cofactor.

The protein localises to the cytoplasm. The catalysed reaction is sn-glycerol 1-phosphate + NAD(+) = dihydroxyacetone phosphate + NADH + H(+). The enzyme catalyses sn-glycerol 1-phosphate + NADP(+) = dihydroxyacetone phosphate + NADPH + H(+). Its function is as follows. Catalyzes the NAD(P)H-dependent reduction of dihydroxyacetonephosphate (DHAP or glycerone phosphate) to glycerol 1-phosphate (G1P). The G1P thus generated is probably used for the synthesis of phosphoglycerolipids in Gram-positive bacterial species. This is Glycerol-1-phosphate dehydrogenase [NAD(P)+] from Geobacillus thermodenitrificans (strain NG80-2).